The chain runs to 389 residues: MSLPTNQLRLAMVAGEPSGDLLAASLLGGLQERLPASTRYYGIGGQRMLAHGFDSHWQMDKLTVRGYVEALGQIPEILRIRGELKRQLLAERPDAFIGVDAPDFNFSVEQAARDAGIPSIHFVCPSIWAWRGGRIKKIAKSVDHMLCLFPFEPAILDKAGVASTYVGHPLADEIPLEPDTHGARIALGLPADGPVIAVLPGSRRSEIGLIGPTFFAAMALMQQREPGVRFVMPAATPALRELLQPLVDAHPQLALTITDGRSQVAMTAADAILVKSGTVTLEAALLKKPMVISYKVPWLTGQIMRRQGYLPYVGLPNILAGRFVVPELLQHFATPEALADATLTQLRDDANRRTLTEVFTEMHLSLRQNTAAKAAEAVVRVLEQRRGRA.

This sequence belongs to the LpxB family.

The catalysed reaction is a lipid X + a UDP-2-N,3-O-bis[(3R)-3-hydroxyacyl]-alpha-D-glucosamine = a lipid A disaccharide + UDP + H(+). It functions in the pathway bacterial outer membrane biogenesis; LPS lipid A biosynthesis. Functionally, condensation of UDP-2,3-diacylglucosamine and 2,3-diacylglucosamine-1-phosphate to form lipid A disaccharide, a precursor of lipid A, a phosphorylated glycolipid that anchors the lipopolysaccharide to the outer membrane of the cell. In Burkholderia ambifaria (strain ATCC BAA-244 / DSM 16087 / CCUG 44356 / LMG 19182 / AMMD) (Burkholderia cepacia (strain AMMD)), this protein is Lipid-A-disaccharide synthase.